Here is a 585-residue protein sequence, read N- to C-terminus: Cytoplasmic polyadenylation element-binding protein 1 (585 aa).

The disordered stretch occupies residues 1–32 (MQHQLKACGDVKTSSRAQQNHRRSTAASAKRS). RRM domains follow at residues 251-356 (RKVF…PWRL) and 373-444 (RTVF…HAET). The tract at residues 513–533 (DQTRILPRPPHHPAAHHSHQR) is disordered. Positions 521–532 (PPHHPAAHHSHQ) are enriched in basic residues.

Interacts with fbf-1.

Its function is as follows. Cytoplasmic polyadenylation element binding protein that binds to and regulates the translation of specific mRNAs. Essential for progression through meiosis. Involved in spermatogenesis. The sequence is that of Cytoplasmic polyadenylation element-binding protein 1 (cpb-1) from Caenorhabditis briggsae.